We begin with the raw amino-acid sequence, 244 residues long: uncharacterized protein (244 aa).

Transmembrane regions (helical) follow at residues 21–41 (FPYS…YGIY), 44–64 (ALGF…AGSV), 66–86 (FIAA…LITL), 139–159 (WYMF…AAMG), 165–185 (VLPF…LVIF), and 199–219 (LLGL…YFLI).

This sequence belongs to the AzlC family.

Its subcellular location is the cell membrane. This is an uncharacterized protein from Haemophilus influenzae (strain ATCC 51907 / DSM 11121 / KW20 / Rd).